The chain runs to 418 residues: Homeobox protein H2.0 (418 aa).

Positions 190–216 are enriched in basic residues; it reads QHQKQQHQQHHHHQHHPKHLHQQHKPP. 3 disordered regions span residues 190–223, 259–296, and 354–418; these read QHQK…STTA, TSPA…RKRS, and RENL…NVVE. Over residues 259 to 273 the composition is skewed to low complexity; sequence TSPAAAAAATSQNGA. A DNA-binding region (homeobox) is located at residues 295–354; sequence RSWSRAVFSNLQRKGLEIQFQQQKYITKPDRRKLAARLNLTDAQVKVWFQNRRMKWRHTR. Residues 391 to 403 are compositionally biased toward low complexity; sequence DYSSDSCSSVDLS.

The protein belongs to the H2.0 homeobox family. In terms of tissue distribution, expressed in cells of the visceral musculature and its anlagen.

Its subcellular location is the nucleus. In terms of biological role, may play a role in pattern formation during embryonic and imaginal development. Is not essential for visceral muscle morphogenesis. This Drosophila melanogaster (Fruit fly) protein is Homeobox protein H2.0 (H2.0).